The following is a 270-amino-acid chain: Autophagy protein 5 (270 aa).

Residue K144 forms a Glycyl lysine isopeptide (Lys-Gly) (interchain with G-Cter in ATG12) linkage.

This sequence belongs to the ATG5 family. In terms of assembly, conjugated with ATG12. In terms of processing, conjugated to ATG12; which is essential for autophagy.

Its subcellular location is the preautophagosomal structure membrane. Functionally, involved in cytoplasm to vacuole transport (Cvt) and autophagic vesicle formation. Autophagy is essential for maintenance of amino acid levels and protein synthesis under nitrogen starvation. Required for selective autophagic degradation of the nucleus (nucleophagy). Also required for mitophagy, which eliminates defective or superfluous mitochondria in order to fulfill cellular energy requirements and prevent excess ROS production. Conjugation with ATG12, through a ubiquitin-like conjugating system involving ATG7 as an E1-like activating enzyme and ATG10 as an E2-like conjugating enzyme, is essential for its function. The ATG12-ATG5 conjugate acts as an E3-like enzyme which is required for lipidation of ATG8 and ATG8 association to the vesicle membranes. The chain is Autophagy protein 5 (ATG5) from Candida glabrata (strain ATCC 2001 / BCRC 20586 / JCM 3761 / NBRC 0622 / NRRL Y-65 / CBS 138) (Yeast).